Here is a 115-residue protein sequence, read N- to C-terminus: Migration and invasion enhancer 1 (115 aa).

Residues 1–10 (MSGDTGTTSV) show a composition bias toward polar residues. Positions 1 to 22 (MSGDTGTTSVAPPPGETEPGHG) are disordered. The residue at position 2 (Ser2) is an N-acetylserine. Cysteines 30 and 33 form a disulfide. Cys112 carries the S-geranylgeranyl cysteine lipid modification. Residues 113-115 (VIL) constitute a propeptide, removed in mature form.

This sequence belongs to the SelWTH family. As to quaternary structure, interacts with GPX1. Isoprenylation facilitates association with the plasma membrane and enhances the migratory phenotype of cells by inducing increased filopodia formation.

The protein localises to the cytoplasm. It localises to the cytosol. It is found in the cell membrane. Its function is as follows. Increases cell migration by inducing filopodia formation at the leading edge of migrating cells. Plays a role in regulation of apoptosis, possibly through control of CASP3. May be involved in a redox-related process. The protein is Migration and invasion enhancer 1 (MIEN1) of Bos taurus (Bovine).